Here is a 387-residue protein sequence, read N- to C-terminus: MTEQYYKIALLFNANKVYDRQVVEGIGQYIQASQCMWDIFVEDEFIYHTDTINQLSIDGIIADFDDPKTVELLQHTLIPTIAVGGSYKQADFYPHFPYIATDNMALVEMALSHLQEKGLSQFAFYGLQVNTHKHWSIERRDAFVELMEKNHYPIYLYEGVQVHAQNWLEEQQKLIVWLKSLPSHTGIIAVTDARARHLLQACEYSKIAVPEELCVVGIDNEELIQYLSRMSLSSVEQGTREIGYQAAKLLHKLLNGQKVSHTPILIPPITVHSRNSTDYRSLTDPLVIQAMHYIRHRACHRIKVGQVLDHLETSRSNLEQRFKNEMNKTIHQVIHEEKISRAKNLLQQTDISIKEITEICGYPSIQYFYSVFKKEFEMTPKEFRLNC.

Positions 288–386 constitute an HTH araC/xylS-type domain; it reads IQAMHYIRHR…EMTPKEFRLN (99 aa). 2 DNA-binding regions (H-T-H motif) span residues 305–326 and 353–376; these read GQVL…KNEM and IKEI…KKEF.

Its function is as follows. Regulatory protein for the xylBAFGHR operon. The sequence is that of Xylose operon regulatory protein (xylR) from Haemophilus influenzae (strain ATCC 51907 / DSM 11121 / KW20 / Rd).